Reading from the N-terminus, the 55-residue chain is Small ribosomal subunit protein eS31 (55 aa).

The Zn(2+) site is built by C26, C29, C44, and C47.

It belongs to the eukaryotic ribosomal protein eS31 family. In terms of assembly, part of the 30S ribosomal subunit. The cofactor is Zn(2+).

The polypeptide is Small ribosomal subunit protein eS31 (Archaeoglobus fulgidus (strain ATCC 49558 / DSM 4304 / JCM 9628 / NBRC 100126 / VC-16)).